The primary structure comprises 585 residues: Mitochondrial sodium/calcium exchanger protein (585 aa).

The signal sequence occupies residues Met1–Gly26. The Extracellular portion of the chain corresponds to Thr27 to Leu95. Asn46 carries an N-linked (GlcNAc...) asparagine glycan. The chain crosses the membrane as a helical span at residues Leu96–Val116. The Cytoplasmic portion of the chain corresponds to Thr117–Ala140. A helical membrane pass occupies residues Gly141–Phe161. Residues Ser162–Gly168 are Extracellular-facing. Residues Leu169–Ile189 traverse the membrane as a helical segment. The Cytoplasmic portion of the chain corresponds to Thr190–Asp205. A helical membrane pass occupies residues Ile206 to Thr226. Residues Leu227–Trp229 lie on the Extracellular side of the membrane. A helical transmembrane segment spans residues Ala230–Val250. At Tyr251–Arg325 the chain is on the cytoplasmic side. Ser258 carries the phosphoserine; by PKA modification. Residues Val326 to Asp346 form a helical membrane-spanning segment. Over Pro347 to Cys360 the chain is Extracellular. The helical transmembrane segment at Leu361–Ile381 threads the bilayer. Residues Tyr382 to Glu383 lie on the Cytoplasmic side of the membrane. The chain crosses the membrane as a helical span at residues Ile384 to Val404. The Extracellular portion of the chain corresponds to Thr405–Arg416. Residues Leu417–Ala437 form a helical membrane-spanning segment. At Thr438–Arg445 the chain is on the cytoplasmic side. Residues Ser446–Gly466 form a helical membrane-spanning segment. At Asn467–Cys491 the chain is on the extracellular side. Residues Phe492–Ile512 form a helical membrane-spanning segment. Topologically, residues Arg513–Gly525 are cytoplasmic. A helical transmembrane segment spans residues Leu526–Val546. Over Pro547–Leu559 the chain is Extracellular. Residues Cys560–Ile580 traverse the membrane as a helical segment. At His581 to Ala585 the chain is on the cytoplasmic side.

It belongs to the Ca(2+):cation antiporter (CaCA) (TC 2.A.19) family. SLC24A subfamily. In terms of processing, phosphorylation at Ser-258 by PKA prevents calcium overload. Ubiquitously expressed. Expressed in dental tissues.

The protein localises to the mitochondrion inner membrane. The protein resides in the cell membrane. The catalysed reaction is Ca(2+)(in) + 3 Na(+)(out) = Ca(2+)(out) + 3 Na(+)(in). It carries out the reaction 3 Li(+)(out) + Ca(2+)(in) = 3 Li(+)(in) + Ca(2+)(out). Its activity is regulated as follows. Inhibited by the sodium/calcium exchanger inhibitor CGP-37157. Strongly inhibited by zinc. Its function is as follows. Mitochondrial sodium/calcium antiporter that mediates sodium-dependent calcium efflux from mitochondrion, by mediating the exchange of 3 sodium ions per 1 calcium ion. Plays a central role in mitochondrial calcium homeostasis by mediating mitochondrial calcium extrusion: calcium efflux is essential for mitochondrial function and cell survival, notably in cardiomyocytes. Regulates rates of glucose-dependent insulin secretion in pancreatic beta-cells during the first phase of insulin secretion: acts by mediating efflux of calcium from mitochondrion, thereby affecting cytoplasmic calcium responses. Required for store-operated Ca(2+) entry (SOCE) and Ca(2+) release-activated Ca(2+) (CRAC) channel regulation: sodium transport by SLC8B1 leads to promote calcium-shuttling that modulates mitochondrial redox status, thereby regulating SOCE activity. Involved in B-lymphocyte chemotaxis. Able to transport Ca(2+) in exchange of either Li(+) or Na(+), explaining how Li(+) catalyzes Ca(2+) exchange. In contrast to other members of the family its function is independent of K(+). The sequence is that of Mitochondrial sodium/calcium exchanger protein from Mus musculus (Mouse).